The primary structure comprises 297 residues: CASP-like protein 4A2 (297 aa).

The span at 1–20 (MKMKRTASSNSEAQSYNESP) shows a compositional bias: polar residues. The tract at residues 1 to 135 (MKMKRTASSN…PINGEESTRT (135 aa)) is disordered. Over 1–149 (MKMKRTASSN…ARGDDLVSLT (149 aa)) the chain is Cytoplasmic. The span at 69–83 (LPSPIPPPPPQFPPP) shows a compositional bias: pro residues. Residues 150-170 (ALGFRITEVILCVISFSIMAA) form a helical membrane-spanning segment. Residues 171–191 (DKTQGWSGDSYDRYKEYRYCL) lie on the Extracellular side of the membrane. Residues 192–212 (AVNVIAFVYSAFEACDAACYI) traverse the membrane as a helical segment. At 213-225 (AKESYMINCGFHD) the chain is on the cytoplasmic side. The helical transmembrane segment at 226 to 246 (LFVFSMDQLLAYLLMSASSCA) threads the bilayer. At 247 to 265 (ATRVDDWVSNWGKDEFTQM) the chain is on the extracellular side. The helical transmembrane segment at 266–286 (ATASIAVSFLAFGAFAVSALI) threads the bilayer. Residues 287-297 (SSYRLFTHASS) are Cytoplasmic-facing.

This sequence belongs to the Casparian strip membrane proteins (CASP) family. Homodimer and heterodimers.

The protein localises to the cell membrane. The polypeptide is CASP-like protein 4A2 (Arabidopsis thaliana (Mouse-ear cress)).